Reading from the N-terminus, the 152-residue chain is NADH-quinone oxidoreductase subunit A 2 (152 aa).

Transmembrane regions (helical) follow at residues 8-28 (FGKV…GYVS), 63-83 (FYVV…LFPW), and 90-110 (LGGF…LGLV).

It belongs to the complex I subunit 3 family. In terms of assembly, NDH-1 is composed of 14 different subunits. Subunits NuoA, H, J, K, L, M, N constitute the membrane sector of the complex.

Its subcellular location is the cell inner membrane. It carries out the reaction a quinone + NADH + 5 H(+)(in) = a quinol + NAD(+) + 4 H(+)(out). Its function is as follows. NDH-1 shuttles electrons from NADH, via FMN and iron-sulfur (Fe-S) centers, to quinones in the respiratory chain. The immediate electron acceptor for the enzyme in this species is believed to be a menaquinone. Couples the redox reaction to proton translocation (for every two electrons transferred, four hydrogen ions are translocated across the cytoplasmic membrane), and thus conserves the redox energy in a proton gradient. In Chloroherpeton thalassium (strain ATCC 35110 / GB-78), this protein is NADH-quinone oxidoreductase subunit A 2.